We begin with the raw amino-acid sequence, 232 residues long: 6-phosphogluconolactonase (232 aa).

The protein belongs to the glucosamine/galactosamine-6-phosphate isomerase family. 6-phosphogluconolactonase subfamily.

The catalysed reaction is 6-phospho-D-glucono-1,5-lactone + H2O = 6-phospho-D-gluconate + H(+). The protein operates within carbohydrate degradation; pentose phosphate pathway; D-ribulose 5-phosphate from D-glucose 6-phosphate (oxidative stage): step 2/3. Functionally, hydrolysis of 6-phosphogluconolactone to 6-phosphogluconate. This chain is 6-phosphogluconolactonase (pgl), found in Aggregatibacter actinomycetemcomitans (Actinobacillus actinomycetemcomitans).